Here is a 301-residue protein sequence, read N- to C-terminus: Heterogeneous nuclear ribonucleoprotein D-like (301 aa).

The interval 1-29 (MEDATEMSGGAEEFAEGSKINASKNQQDD) is disordered. 2 RRM domains span residues 30–112 (GKMF…KGKE) and 115–194 (KKVF…QPKE). Disordered stretches follow at residues 194 to 230 (EVYRQQQQQQKGGKSNASGGRGGGRGRGRGQGQNWNQ) and 269 to 301 (GYGPGYTDYSGQQSTYGKASRGGGNHQNNYQPY). Residues 212 to 224 (GGRGGGRGRGRGQ) show a composition bias toward gly residues.

Its subcellular location is the nucleus. It localises to the cytoplasm. Acts as a transcriptional regulator. Binds DNA and RNA. The protein is Heterogeneous nuclear ribonucleoprotein D-like (HNRNPDL) of Gallus gallus (Chicken).